We begin with the raw amino-acid sequence, 132 residues long: Pro-MCH 2 (132 aa).

A signal peptide spans M1–A24. A disulfide bond links C120 and C129.

Belongs to the melanin-concentrating hormone family. Pituitary gland. Produced in neurons of lateral basal hypothalamus which project both to the brain and to the neural lobe of the pituitary gland from where MCH is released.

In terms of biological role, plays a role in skin pigmentation by antagonizing the action of melanotropin alpha. Induces melanin concentration within the melanophores. May participate in the control of the hypothalamo-pituitary adrenal gland axis by inhibiting the release of ACTH. This Oncorhynchus keta (Chum salmon) protein is Pro-MCH 2 (mch2).